The primary structure comprises 488 residues: Ribulose bisphosphate carboxylase large chain (488 aa).

2 residues coordinate substrate: asparagine 127 and threonine 177. Lysine 179 functions as the Proton acceptor in the catalytic mechanism. Lysine 181 lines the substrate pocket. The Mg(2+) site is built by lysine 205, aspartate 207, and glutamate 208. Lysine 205 bears the N6-carboxylysine mark. Histidine 297 serves as the catalytic Proton acceptor. Substrate-binding residues include arginine 298, histidine 330, and serine 382.

Belongs to the RuBisCO large chain family. Type I subfamily. Heterohexadecamer of 8 large chains and 8 small chains. Mg(2+) is required as a cofactor.

Its subcellular location is the plastid. The protein resides in the chloroplast. The enzyme catalyses 2 (2R)-3-phosphoglycerate + 2 H(+) = D-ribulose 1,5-bisphosphate + CO2 + H2O. It carries out the reaction D-ribulose 1,5-bisphosphate + O2 = 2-phosphoglycolate + (2R)-3-phosphoglycerate + 2 H(+). Functionally, ruBisCO catalyzes two reactions: the carboxylation of D-ribulose 1,5-bisphosphate, the primary event in carbon dioxide fixation, as well as the oxidative fragmentation of the pentose substrate in the photorespiration process. Both reactions occur simultaneously and in competition at the same active site. This chain is Ribulose bisphosphate carboxylase large chain, found in Cyanidioschyzon merolae (strain NIES-3377 / 10D) (Unicellular red alga).